The chain runs to 254 residues: MNALLNILLCTLAATALAEISPNIVGGSNAAAGEFPWQGSLQVRSGTSWFHICGCVLYTTSKALTAAHCLSNSASSYRLGFGMLRMNNVDGTEQYSSVTSYTNHPNYNGNAAGYPNDIAVLRLTSSMDTSSSAVGPSVWLLVERLCRTNMYDQRMGKTQWRWQHPNNLQKVDMTVLTNSDCSSRWSGISGATVNSGHICIFESGRSACSGDSGGPLVCGNTLTGITSWGISSCSGSYPSVYTRVSSFYNWVQTQ.

Positions methionine 1–alanine 18 are cleaved as a signal peptide. Positions glutamate 19 to asparagine 23 are cleaved as a propeptide — activation peptide. Residues isoleucine 24–glutamine 254 form the Peptidase S1 domain. Cysteine 53 and cysteine 69 form a disulfide bridge. Active-site charge relay system residues include histidine 68 and aspartate 117. Disulfide bonds link cysteine 146/cysteine 218, cysteine 181/cysteine 199, and cysteine 208/cysteine 233. Serine 212 functions as the Charge relay system in the catalytic mechanism.

Belongs to the peptidase S1 family. In terms of assembly, monomer. As to expression, expressed specifically in the distal quarter of the intestine.

It is found in the secreted. The protein localises to the extracellular space. Activated by an autocatalytic mechanism. Specificity similar to chymotrypsin. The polypeptide is Chymotrypsin-like serine proteinase (Haliotis rufescens (California red abalone)).